We begin with the raw amino-acid sequence, 391 residues long: U-box domain-containing protein 57 (391 aa).

The 178-residue stretch at 1-178 (MVKNSYVLFA…DLTERLLQVE (178 aa)) folds into the MIF4G domain. A U-box domain is found at 322 to 391 (QPPPSFICPI…LRSAIEELGR (70 aa)).

It catalyses the reaction S-ubiquitinyl-[E2 ubiquitin-conjugating enzyme]-L-cysteine + [acceptor protein]-L-lysine = [E2 ubiquitin-conjugating enzyme]-L-cysteine + N(6)-ubiquitinyl-[acceptor protein]-L-lysine.. The protein operates within protein modification; protein ubiquitination. In terms of biological role, functions as an E3 ubiquitin ligase. The protein is U-box domain-containing protein 57 (PUB57) of Arabidopsis thaliana (Mouse-ear cress).